An 83-amino-acid chain; its full sequence is uncharacterized protein (83 aa).

This is an uncharacterized protein from Synechocystis sp. (strain ATCC 27184 / PCC 6803 / Kazusa).